The sequence spans 397 residues: Serpin B10 (397 aa).

A Nuclear localization signal motif is present at residues 74-77 (KKRK).

Belongs to the serpin family. Ov-serpin subfamily.

The protein resides in the nucleus. Its subcellular location is the cytoplasm. Its function is as follows. Protease inhibitor that may play a role in the regulation of protease activities during hematopoiesis and apoptosis induced by TNF. May regulate protease activities in the cytoplasm and in the nucleus. The polypeptide is Serpin B10 (SERPINB10) (Plecturocebus moloch (Dusky titi monkey)).